The sequence spans 908 residues: DNA mismatch repair protein MutS (908 aa).

629 to 636 contacts ATP; the sequence is GPNMAGKS. A disordered region spans residues 822 to 863; it reads ADEADGAPSEDPPSEDPPSGDGVRAKKGEADAVPDLEDSQAN.

This sequence belongs to the DNA mismatch repair MutS family.

This protein is involved in the repair of mismatches in DNA. It is possible that it carries out the mismatch recognition step. This protein has a weak ATPase activity. The polypeptide is DNA mismatch repair protein MutS (Salinibacter ruber (strain DSM 13855 / M31)).